Here is a 297-residue protein sequence, read N- to C-terminus: 4-hydroxy-tetrahydrodipicolinate synthase (297 aa).

Threonine 46 serves as a coordination point for pyruvate. Tyrosine 134 (proton donor/acceptor) is an active-site residue. Lysine 163 functions as the Schiff-base intermediate with substrate in the catalytic mechanism. Isoleucine 205 contacts pyruvate.

It belongs to the DapA family. Homotetramer; dimer of dimers.

Its subcellular location is the cytoplasm. The enzyme catalyses L-aspartate 4-semialdehyde + pyruvate = (2S,4S)-4-hydroxy-2,3,4,5-tetrahydrodipicolinate + H2O + H(+). The protein operates within amino-acid biosynthesis; L-lysine biosynthesis via DAP pathway; (S)-tetrahydrodipicolinate from L-aspartate: step 3/4. In terms of biological role, catalyzes the condensation of (S)-aspartate-beta-semialdehyde [(S)-ASA] and pyruvate to 4-hydroxy-tetrahydrodipicolinate (HTPA). The protein is 4-hydroxy-tetrahydrodipicolinate synthase of Thermoanaerobacter pseudethanolicus (strain ATCC 33223 / 39E) (Clostridium thermohydrosulfuricum).